A 682-amino-acid chain; its full sequence is MSRKQLALFEPTLVVQALKEAVKKLNPQAQWRNPVMFIVWIGSLLTTCISIAMASGAMPGNALFSAAISGWLWVTVLFANFAEALAEGRSKAQANSLKGVKKTAFARKLREPKYGAAADKVPADQLRKGDIVLVEAGDIIPCDGEVIEGGASVDESAITGESAPVIRESGGDFASVTGGTRILSDWLVIECSVNPGETFLDRMIAMVEGAQRRKTPNEIALTILLIALTIVFLLATATLWPFSAWGGNAVSVTVLVALLVCLIPTTIGGLLSAIGVAGMSRMLGANVIATSGRAVEAAGDVDVLLLDKTGTITLGNRQASEFIPAQGVDEKTLADAAQLASLADETPEGRSIVILAKQRFNLRERDVQSLHATFVPFTAQSRMSGINIDNRMIRKGSVDAIRRHVEANGGHFPADVDQKVDQVARQGATPLVVVEGSRVLGVIALKDIVKGGIKERFAQLRKMDIKTVMITGDNRLTAAAIAAEAGVDDFLAEATPEAKLALIRQYQAESRLVAMTGDGTNDAPALAQADVAVAMNSGTQAAKEAGNMVALDSNPTKLIEVVHIGKQMLMTRGSLTTFSIANDVAKYFAIIPAAFAATYPQLNALNIMRLHSPDSAILSAVIFNALIIVFLIPLALKGVSYKPLTASAMLRRNLWIYGLGGLLVPFIGIKVIDLLLTVCGLV.

4 consecutive transmembrane segments (helical) span residues 34 to 54 (PVMF…IAMA), 62 to 82 (ALFS…ANFA), 219 to 239 (IALT…TATL), and 254 to 274 (VLVA…LSAI). Asp307 acts as the 4-aspartylphosphate intermediate in catalysis. ATP is bound by residues Asp344, Glu348, 377–384 (FTAQSRMS), and Lys395. Mg(2+) contacts are provided by Asp518 and Asp522. 3 consecutive transmembrane segments (helical) span residues 588–608 (FAII…LNIM), 616–636 (AILS…PLAL), and 656–676 (IYGL…DLLL).

This sequence belongs to the cation transport ATPase (P-type) (TC 3.A.3) family. Type IA subfamily. The system is composed of three essential subunits: KdpA, KdpB and KdpC.

It localises to the cell inner membrane. The catalysed reaction is K(+)(out) + ATP + H2O = K(+)(in) + ADP + phosphate + H(+). Functionally, part of the high-affinity ATP-driven potassium transport (or Kdp) system, which catalyzes the hydrolysis of ATP coupled with the electrogenic transport of potassium into the cytoplasm. This subunit is responsible for energy coupling to the transport system and for the release of the potassium ions to the cytoplasm. In Shigella boydii serotype 18 (strain CDC 3083-94 / BS512), this protein is Potassium-transporting ATPase ATP-binding subunit.